We begin with the raw amino-acid sequence, 124 residues long: Fluoride-specific ion channel FluC 2 (124 aa).

Transmembrane regions (helical) follow at residues 8–28, 34–54, 60–80, and 93–113; these read LPNQ…GALV, NDLL…GLPF, LLLG…MVEC, and LGLI…GFLI. 2 residues coordinate Na(+): glycine 68 and threonine 71.

This sequence belongs to the fluoride channel Fluc/FEX (TC 1.A.43) family.

The protein resides in the cell inner membrane. It carries out the reaction fluoride(in) = fluoride(out). With respect to regulation, na(+) is not transported, but it plays an essential structural role and its presence is essential for fluoride channel function. Its function is as follows. Fluoride-specific ion channel. Important for reducing fluoride concentration in the cell, thus reducing its toxicity. The protein is Fluoride-specific ion channel FluC 2 of Prochlorococcus marinus (strain MIT 9313).